Here is a 332-residue protein sequence, read N- to C-terminus: Ribose-phosphate pyrophosphokinase (332 aa).

ATP is bound at residue 55–57 (DGE). Mg(2+) contacts are provided by H148 and D187. K211 is a catalytic residue. D-ribose 5-phosphate-binding positions include R213, D237, and 241–245 (DTGGT).

Belongs to the ribose-phosphate pyrophosphokinase family. Class I subfamily. Homohexamer. Mg(2+) serves as cofactor.

It localises to the cytoplasm. The catalysed reaction is D-ribose 5-phosphate + ATP = 5-phospho-alpha-D-ribose 1-diphosphate + AMP + H(+). It participates in metabolic intermediate biosynthesis; 5-phospho-alpha-D-ribose 1-diphosphate biosynthesis; 5-phospho-alpha-D-ribose 1-diphosphate from D-ribose 5-phosphate (route I): step 1/1. Involved in the biosynthesis of the central metabolite phospho-alpha-D-ribosyl-1-pyrophosphate (PRPP) via the transfer of pyrophosphoryl group from ATP to 1-hydroxyl of ribose-5-phosphate (Rib-5-P). In Prochlorococcus marinus (strain MIT 9313), this protein is Ribose-phosphate pyrophosphokinase.